Here is a 576-residue protein sequence, read N- to C-terminus: M-phase inducer phosphatase 2 (576 aa).

S42 bears the Phosphoserine mark. The span at 90 to 105 shows a compositional bias: low complexity; that stretch reads RRTSECSLSSESSESS. The interval 90-119 is disordered; that stretch reads RRTSECSLSSESSESSDAGLCMDSPSPVDP. The residue at position 167 (S167) is a Phosphoserine; by MELK. Residue S248 is modified to Phosphoserine. S321 is subject to Phosphoserine; by MELK and MAPK14. The segment at 338-358 is disordered; the sequence is QDRDVPVQSKRRKSVTPLEEQ. Residue S351 is modified to Phosphoserine; by AURKA. S372 is modified (phosphoserine; by BRSK1 and MAPK14). In terms of domain architecture, Rhodanese spans 427–534; the sequence is IVEKFVIVDC…FFPQHPNFCE (108 aa). Residue C483 is part of the active site. Residue S559 is modified to Phosphoserine.

Belongs to the MPI phosphatase family. As to quaternary structure, interacts with MAPK14 and 14-3-3 proteins. In terms of processing, phosphorylated by BRSK1 in vitro. Phosphorylated by CHEK1, which inhibits the activity of this protein. Phosphorylation at Ser-351 by AURKA might locally participate in the control of the onset of mitosis. Phosphorylation by MELK at Ser-167 promotes localization to the centrosome and the spindle poles during mitosis. Phosphorylation at Ser-321 and Ser-372 by MAPK14 is required for binding to 14-3-3 proteins. As to expression, expressed predominantly in spleen, lung, heart, brain, intestine, and muscle.

It is found in the cytoplasm. Its subcellular location is the cytoskeleton. The protein resides in the microtubule organizing center. The protein localises to the centrosome. It localises to the spindle pole. The catalysed reaction is O-phospho-L-tyrosyl-[protein] + H2O = L-tyrosyl-[protein] + phosphate. Stimulated by B-type cyclins. Its function is as follows. Tyrosine protein phosphatase which functions as a dosage-dependent inducer of mitotic progression. Directly dephosphorylates CDK1 and stimulates its kinase activity. Required for G2/M phases of the cell cycle progression and abscission during cytokinesis in a ECT2-dependent manner. The three isoforms seem to have a different level of activity. In Mus musculus (Mouse), this protein is M-phase inducer phosphatase 2 (Cdc25b).